A 132-amino-acid chain; its full sequence is Small ribosomal subunit protein bS6 (132 aa).

Positions 96 to 132 are disordered; the sequence is HAEGPSIQMQKRDERERGDRGDRPDRGDRGERGGFRR. Positions 105–132 are enriched in basic and acidic residues; the sequence is QKRDERERGDRGDRPDRGDRGERGGFRR.

Belongs to the bacterial ribosomal protein bS6 family.

Its function is as follows. Binds together with bS18 to 16S ribosomal RNA. This Cereibacter sphaeroides (strain ATCC 17025 / ATH 2.4.3) (Rhodobacter sphaeroides) protein is Small ribosomal subunit protein bS6.